The primary structure comprises 293 residues: Notch homolog 2 N-terminal-like protein C (293 aa).

EGF-like domains lie at 42–81, 82–120, 123–161, and 162–198; these read PPRMCRDGYEPCVNEGMCVTYHNGTGYCKCPEGFLGEYCQ, HRDPCEKNRCQNGGTCVAQAMLGKATCRCASGFTGEDCQ, TSHPCFVSRPCLNGGTCHMLSRDTYECTCQVGFTGKECQ, and WTDACLSHPCANGSTCTTVANQFSCKCLTGFTGQKCE. Intrachain disulfides connect Cys46/Cys59, Cys53/Cys69, Cys71/Cys80, Cys86/Cys97, Cys91/Cys108, Cys110/Cys119, Cys127/Cys139, Cys133/Cys149, Cys151/Cys160, Cys166/Cys177, Cys171/Cys186, Cys188/Cys197, Cys204/Cys216, Cys210/Cys225, Cys227/Cys236, Cys243/Cys254, and Cys248/Cys264. Residue Asn64 is glycosylated (N-linked (GlcNAc...) asparagine). N-linked (GlcNAc...) asparagine glycosylation occurs at Asn173. Residues 200–237 form the EGF-like 5; calcium-binding domain; that stretch reads DVNECDIPGHCQHGGTCLNLPGSYQCQCLQGFTGQYCD. The 38-residue stretch at 239–276 folds into the EGF-like 6 domain; that stretch reads LYVPCAPSPCVNGGTCRQTGDFTFECNCLPETVRRGTE.

Belongs to the NOTCH family. In terms of assembly, interacts with NOTCH2. Interacts with DLL1; the interaction is direct. As to expression, expressed in radial glia neural stem cells during cortical development.

The protein localises to the secreted. Functionally, human-specific protein that promotes neural progenitor proliferation and evolutionary expansion of the brain neocortex by regulating the Notch signaling pathway. Able to promote neural progenitor self-renewal, possibly by down-regulating neuronal differentiation genes, thereby delaying the differentiation of neuronal progenitors and leading to an overall final increase in neuronal production. Acts by enhancing the Notch signaling pathway via two different mechanisms that probably work in parallel to reach the same effect. Enhances Notch signaling pathway in a non-cell-autonomous manner via direct interaction with NOTCH2. Also promotes Notch signaling pathway in a cell-autonomous manner through inhibition of cis DLL1-NOTCH2 interactions, which promotes neuronal differentiation. This chain is Notch homolog 2 N-terminal-like protein C, found in Homo sapiens (Human).